The sequence spans 644 residues: 1-deoxy-D-xylulose-5-phosphate synthase (644 aa).

Thiamine diphosphate-binding positions include His-72 and Gly-113–Ala-115. Asp-144 lines the Mg(2+) pocket. Thiamine diphosphate contacts are provided by residues Gly-145–Ala-146, Asn-174, Tyr-287, and Glu-370. Residue Asn-174 coordinates Mg(2+).

This sequence belongs to the transketolase family. DXPS subfamily. In terms of assembly, homodimer. Requires Mg(2+) as cofactor. Thiamine diphosphate is required as a cofactor.

The enzyme catalyses D-glyceraldehyde 3-phosphate + pyruvate + H(+) = 1-deoxy-D-xylulose 5-phosphate + CO2. It functions in the pathway metabolic intermediate biosynthesis; 1-deoxy-D-xylulose 5-phosphate biosynthesis; 1-deoxy-D-xylulose 5-phosphate from D-glyceraldehyde 3-phosphate and pyruvate: step 1/1. Catalyzes the acyloin condensation reaction between C atoms 2 and 3 of pyruvate and glyceraldehyde 3-phosphate to yield 1-deoxy-D-xylulose-5-phosphate (DXP). The chain is 1-deoxy-D-xylulose-5-phosphate synthase from Prochlorococcus marinus (strain MIT 9313).